We begin with the raw amino-acid sequence, 255 residues long: 5-oxoprolinase subunit A (255 aa).

The protein belongs to the LamB/PxpA family. In terms of assembly, forms a complex composed of PxpA, PxpB and PxpC.

It catalyses the reaction 5-oxo-L-proline + ATP + 2 H2O = L-glutamate + ADP + phosphate + H(+). Functionally, catalyzes the cleavage of 5-oxoproline to form L-glutamate coupled to the hydrolysis of ATP to ADP and inorganic phosphate. The chain is 5-oxoprolinase subunit A from Corynebacterium efficiens (strain DSM 44549 / YS-314 / AJ 12310 / JCM 11189 / NBRC 100395).